A 360-amino-acid polypeptide reads, in one-letter code: Threonine synthase (360 aa).

K69 bears the N6-(pyridoxal phosphate)lysine mark. Pyridoxal 5'-phosphate contacts are provided by residues N95, 196–200 (GNAGN), and T326.

This sequence belongs to the threonine synthase family. In terms of assembly, homodimer. Pyridoxal 5'-phosphate is required as a cofactor.

The catalysed reaction is O-phospho-L-homoserine + H2O = L-threonine + phosphate. It functions in the pathway amino-acid biosynthesis; L-threonine biosynthesis; L-threonine from L-aspartate: step 5/5. Catalyzes the gamma-elimination of phosphate from L-phosphohomoserine and the beta-addition of water to produce L-threonine. This chain is Threonine synthase (thrC), found in Mycobacterium bovis (strain ATCC BAA-935 / AF2122/97).